The chain runs to 89 residues: Large ribosomal subunit protein eL34 (89 aa).

The protein belongs to the eukaryotic ribosomal protein eL34 family.

The chain is Large ribosomal subunit protein eL34 from Methanococcus vannielii (strain ATCC 35089 / DSM 1224 / JCM 13029 / OCM 148 / SB).